Reading from the N-terminus, the 681-residue chain is MSEPRKILVTSALPYANGSIHLGHMLEYIQTDMWVRFQKLRGNQCIYVCADDAHGSAIMLRAEKEGITPEQLIANVQAEHCADFAEFLVDFDNFHSTHAEENRELSSQIYLKLRDAGHIATRSITQYFDPEKKMFLADRFIKGTCPKCGTEDQYGDNCEKCGATYAPTDLKDPKSAISGATPVLKDSQHFFFKLPDFQQMLQSWTRSGTLQDAVANKIAEWLDAGLQQWDISRDAPYFGFEIPDEPGKYFYVWLDAPIGYMASFKNLCSRRPELDFDAFWGKDSTAELYHFIGKDIVNFHALFWPAMLEGAGYRKPTGINVHGYLTVNGQKMSKSRGTFIKARTYLEHLSPEYLRYYYASKLGRGVDDLDLNLEDFVQKVNSDLVGKVVNIASRCAGFIHKGNAGVMVDSNAAPELTEAFLAAAPSIADAYEARDFARAMREIMGLADRANAWIADKAPWSLNKQEGKQDEVQAICATGIILFRQLVIFLKPVLPLLAADAEAFLNVAPLTWNDHQQLLANHQLNKFKPLMTRIDPVKVQAMTDASKEDLAASQTDTGGPKGNGELVKDPLSAEIDFDAFAAIDLRVALIVKAEAVEGADKLLRLTLDIGDEQRNVFSGIKSAYPDPSKLDGRLTMMIANLKPRKMKFGISEGMVMAAGPGGEEIYLLSPDSGAKPGQRIK.

The short motif at 14 to 24 (PYANGSIHLGH) is the 'HIGH' region element. Zn(2+) contacts are provided by Cys145, Cys148, Cys158, and Cys161. A 'KMSKS' region motif is present at residues 331–335 (KMSKS). Residue Lys334 coordinates ATP. The 103-residue stretch at 579-681 (AFAAIDLRVA…SGAKPGQRIK (103 aa)) folds into the tRNA-binding domain.

It belongs to the class-I aminoacyl-tRNA synthetase family. MetG type 1 subfamily. As to quaternary structure, homodimer. The cofactor is Zn(2+).

Its subcellular location is the cytoplasm. The catalysed reaction is tRNA(Met) + L-methionine + ATP = L-methionyl-tRNA(Met) + AMP + diphosphate. Is required not only for elongation of protein synthesis but also for the initiation of all mRNA translation through initiator tRNA(fMet) aminoacylation. The sequence is that of Methionine--tRNA ligase from Pseudomonas fluorescens (strain ATCC BAA-477 / NRRL B-23932 / Pf-5).